The sequence spans 416 residues: D-amino acid dehydrogenase (416 aa).

3-17 (VTILGAGVIGVTTAY) provides a ligand contact to FAD.

This sequence belongs to the DadA oxidoreductase family. It depends on FAD as a cofactor.

The catalysed reaction is a D-alpha-amino acid + A + H2O = a 2-oxocarboxylate + AH2 + NH4(+). The protein operates within amino-acid degradation; D-alanine degradation; NH(3) and pyruvate from D-alanine: step 1/1. Oxidative deamination of D-amino acids. In Rhizobium rhizogenes (strain K84 / ATCC BAA-868) (Agrobacterium radiobacter), this protein is D-amino acid dehydrogenase.